The sequence spans 149 residues: RALGPLIPSRLFDQFFGEGLLEYDLLPWFSSTISPYYRQSLFRSVLESGISEVRSDREKFTIMLDVKHFSPEDLSVKIIDDFVEIHGKHSERQDDHGYISREFHRRYRLPANVDQAAITCSLSNDGMLTFSGPKVPANMDASHGERPIP.

One can recognise a sHSP domain in the interval Leu41–Pro149. Zn(2+) contacts are provided by His89, Glu91, His96, and His143.

This sequence belongs to the small heat shock protein (HSP20) family. As to quaternary structure, heteropolymer composed of three CRYAA and one CRYAB subunits. Inter-subunit bridging via zinc ions enhances stability, which is crucial as there is no protein turn over in the lens. Can also form homodimers and homotetramers (dimers of dimers) which serve as the building blocks of homooligomers. Within homooligomers, the zinc-binding motif is created from residues of 3 different molecules. His-89 and Glu-91 from one molecule are ligands of the zinc ion, and His-96 and His-143 residues from additional molecules complete the site with tetrahedral coordination geometry. Part of a complex required for lens intermediate filament formation composed of BFSP1, BFSP2 and CRYAA.

The protein localises to the cytoplasm. Its subcellular location is the nucleus. Contributes to the transparency and refractive index of the lens. May act as a chaperone, preventing aggregation of various proteins under a wide range of stress conditions. This Columba livia (Rock dove) protein is Alpha-crystallin A chain (CRYAA).